We begin with the raw amino-acid sequence, 381 residues long: Selenoprotein P (381 aa).

The first 19 residues, 1–19 (MWRSLGLALALCLLPLGGT), serve as a signal peptide directing secretion. The N-linked (GlcNAc...) asparagine glycan is linked to N46. A non-standard amino acid (selenocysteine) is located at residue U59. N-linked (GlcNAc...) asparagine glycosylation is found at N83, N119, and N128. Residues 202-268 (SPHYHHEHHH…ENRDMPGSED (67 aa)) are disordered. Basic residues predominate over residues 204–217 (HYHHEHHHNHRHQH). Polar residues predominate over residues 218 to 229 (LGSSELSENQQP). Positions 243–255 (LHHHHKHKGQHRQ) are enriched in basic residues. S266 carries the post-translational modification Phosphoserine. 2 non-standard amino acids (selenocysteine) are found at residues U318 and U330. N338 carries N-linked (GlcNAc...) asparagine glycosylation. 6 non-standard amino acids (selenocysteine) are found at residues U345, U352, U367, U369, U376, and U378. The segment at 352-381 (UQISQQLIPTEASTSURUKNQAKKUEUPSN) is disordered. Positions 353 to 369 (QISQQLIPTEASTSURU) are enriched in polar residues.

This sequence belongs to the selenoprotein P family. Post-translationally, phosphorylation sites are present in the extracellular medium.

The protein resides in the secreted. In terms of biological role, might be responsible for some of the extracellular antioxidant defense properties of selenium or might be involved in the transport of selenium. May supply selenium to tissues such as brain and testis. The protein is Selenoprotein P of Pongo abelii (Sumatran orangutan).